Here is a 600-residue protein sequence, read N- to C-terminus: UvrABC system protein C (600 aa).

Residues 15 to 92 form the GIY-YIG domain; that stretch reads DKPGCYLMKD…IKKYQPYYNV (78 aa). A UVR domain is found at 197 to 232; that stretch reads AQVKQDLTEKMTQASMDLEFERAAEIRDQLKYIEQT.

It belongs to the UvrC family. Interacts with UvrB in an incision complex.

It is found in the cytoplasm. The UvrABC repair system catalyzes the recognition and processing of DNA lesions. UvrC both incises the 5' and 3' sides of the lesion. The N-terminal half is responsible for the 3' incision and the C-terminal half is responsible for the 5' incision. The sequence is that of UvrABC system protein C from Lactobacillus johnsonii (strain CNCM I-12250 / La1 / NCC 533).